Consider the following 37-residue polypeptide: Large ribosomal subunit protein bL36c (37 aa).

Belongs to the bacterial ribosomal protein bL36 family.

The protein localises to the plastid. It is found in the chloroplast. The protein is Large ribosomal subunit protein bL36c (rpl36) of Chlamydomonas reinhardtii (Chlamydomonas smithii).